The primary structure comprises 138 residues: Secreted RxLR effector protein 91 (138 aa).

The first 18 residues, 1 to 18, serve as a signal peptide directing secretion; the sequence is MVIPHIICLPMALHLWTC. Residues 34–37 carry the RxLR motif; it reads RRLR. N-linked (GlcNAc...) asparagine glycosylation is present at Asn-93.

The protein belongs to the RxLR effector family.

It is found in the secreted. The protein resides in the host nucleus. Functionally, secreted effector that completely suppresses the host cell death induced by cell death-inducing proteins. This Plasmopara viticola (Downy mildew of grapevine) protein is Secreted RxLR effector protein 91.